Reading from the N-terminus, the 207-residue chain is MGNTVQTDNDFMQMQKPFALFAKWLEEATVSEINDPNAMALATVDKTGFPNVRMVLLKDFSPQGFVFYTNYESPKGQEILKSMKASLVFHWKSLRRQVRIRGIVEKVTPQEADAYFQSRPRDSRIGAWASKQSQPLESRFVLEKAIARYTTRYAVGNIPRPPYWSGFRVKPLSIEFWCDRPFRLHDRLLFTRDSVEHVDWKRQKLYP.

FMN-binding positions include 53 to 58, 68 to 69, K75, and Q97; these read RMVLLK and YT. K58 is a substrate binding site. Y115, R119, and S123 together coordinate substrate. FMN contacts are provided by residues 132–133 and W177; that span reads QS. Position 183–185 (183–185) interacts with substrate; that stretch reads RLH. Residue R187 participates in FMN binding.

Belongs to the pyridoxamine 5'-phosphate oxidase family. In terms of assembly, homodimer. FMN is required as a cofactor.

The catalysed reaction is pyridoxamine 5'-phosphate + O2 + H2O = pyridoxal 5'-phosphate + H2O2 + NH4(+). The enzyme catalyses pyridoxine 5'-phosphate + O2 = pyridoxal 5'-phosphate + H2O2. Its pathway is cofactor metabolism; pyridoxal 5'-phosphate salvage; pyridoxal 5'-phosphate from pyridoxamine 5'-phosphate: step 1/1. The protein operates within cofactor metabolism; pyridoxal 5'-phosphate salvage; pyridoxal 5'-phosphate from pyridoxine 5'-phosphate: step 1/1. In terms of biological role, catalyzes the oxidation of either pyridoxine 5'-phosphate (PNP) or pyridoxamine 5'-phosphate (PMP) into pyridoxal 5'-phosphate (PLP). The protein is Pyridoxine/pyridoxamine 5'-phosphate oxidase of Bartonella henselae (strain ATCC 49882 / DSM 28221 / CCUG 30454 / Houston 1) (Rochalimaea henselae).